A 194-amino-acid chain; its full sequence is MALVPVVVEQTSRGERSYDIFSRLLKERIIFLGDEINDVTASLLVAQLLFLEAEDPDKDIQIYINSPGGSITAGMAIYDTMNYIKPDVSTICVGMAASMGAFLLAAGAKGKRFALPNAEVMIHQPLGGTRGQAEDIRIHAERIVKLRDTLNKILVERTGQPLERVQKDTDRDFFMEAKEAKEYGIIDEVISSRK.

Ser98 (nucleophile) is an active-site residue. His123 is a catalytic residue.

The protein belongs to the peptidase S14 family. As to quaternary structure, fourteen ClpP subunits assemble into 2 heptameric rings which stack back to back to give a disk-like structure with a central cavity, resembling the structure of eukaryotic proteasomes.

The protein resides in the cytoplasm. The catalysed reaction is Hydrolysis of proteins to small peptides in the presence of ATP and magnesium. alpha-casein is the usual test substrate. In the absence of ATP, only oligopeptides shorter than five residues are hydrolyzed (such as succinyl-Leu-Tyr-|-NHMec, and Leu-Tyr-Leu-|-Tyr-Trp, in which cleavage of the -Tyr-|-Leu- and -Tyr-|-Trp bonds also occurs).. Functionally, cleaves peptides in various proteins in a process that requires ATP hydrolysis. Has a chymotrypsin-like activity. Plays a major role in the degradation of misfolded proteins. In Alkaliphilus metalliredigens (strain QYMF), this protein is ATP-dependent Clp protease proteolytic subunit.